We begin with the raw amino-acid sequence, 267 residues long: MSYFEAFMLALVQGFTEFLPISSSAHLILPSAVLGWEDQGLAFDVAVHVGTLAAVVIYFRKEVVSLLSAFFGSVFKGDRSKEAKLAWMIILATIPACIFGLLMKDIVELYLRSAWVIATTTIIFGLLLWWVDKNSSLRDDEYQAGWKKALFIGLAQAMAIIPGTSRSGATITAALYLGFTREAAARFSFLMSIPIITLAGGYLGLKLVTSGDPIHVGTLLTGIVVSFISAYICIHFFLKLISRMGMTPFVIYRLILGFGLFAFLMMQ.

The next 8 membrane-spanning stretches (helical) occupy residues 1–21 (MSYF…FLPI), 39–59 (QGLA…VIYF), 83–103 (AKLA…GLLM), 111–131 (LRSA…LWWV), 144–164 (AGWK…IPGT), 189–209 (FLMS…KLVT), 218–238 (TLLT…HFFL), and 246–266 (MTPF…FLMM).

The protein belongs to the UppP family.

It localises to the cell inner membrane. It carries out the reaction di-trans,octa-cis-undecaprenyl diphosphate + H2O = di-trans,octa-cis-undecaprenyl phosphate + phosphate + H(+). Its function is as follows. Catalyzes the dephosphorylation of undecaprenyl diphosphate (UPP). Confers resistance to bacitracin. The polypeptide is Undecaprenyl-diphosphatase (Vibrio atlanticus (strain LGP32) (Vibrio splendidus (strain Mel32))).